Here is a 505-residue protein sequence, read N- to C-terminus: Maturase K (505 aa).

This sequence belongs to the intron maturase 2 family. MatK subfamily.

It localises to the plastid. It is found in the chloroplast. Its function is as follows. Usually encoded in the trnK tRNA gene intron. Probably assists in splicing its own and other chloroplast group II introns. This chain is Maturase K, found in Ficus carica (Common fig).